The sequence spans 517 residues: Cytochrome P450 monooxygenase TRI4 (517 aa).

A helical membrane pass occupies residues 15–37 (AVGAAVAVGALYFFCQCFYNLYL). A glycan (N-linked (GlcNAc...) asparagine) is linked at Asn-444. Heme is bound at residue Cys-452.

The protein belongs to the cytochrome P450 family. The cofactor is heme.

It localises to the membrane. The protein operates within sesquiterpene biosynthesis; trichothecene biosynthesis. In terms of biological role, cytochrome P450 monooxygenase; part of the gene cluster that mediates the production of the antimicrobial trichothecene harzianum A (HA) that plays a role in Botrytis cinerea antagonistic activity and plant defense priming. The biosynthesis of harzianum A begins with the cyclization of farnesyl diphosphate to trichodiene and is catalyzed by the trichodiene synthase TRI5. Trichodiene undergoes a series of oxygenations catalyzed by the cytochrome P450 monooxygenase TRI4. TRI4 controls the addition of 3 oxygens at C-2, C-11, and the C-12, C-13-epoxide to form the intermediate isotrichodiol. Isotrichodiol then undergoes a non-enzymatic isomerization and cyclization to form 12,13-epoxytrichothec-9-ene (EPT) which is further converted to trichodermol by the cytochrome P450 monooxygenase TRI11 via C-4 hydroxylation. The last step of HA synthesis is esterification of an octatriendioyl moiety to the C-4 oxygen of trichodermol. The octatriendioyl moiety is probably produced by the polyketide synthase TRI17 and the esterification performed by the trichothecene O-acetyltransferase TRI3. The chain is Cytochrome P450 monooxygenase TRI4 from Trichoderma arundinaceum.